The sequence spans 333 residues: Trimethylamine N-oxide-binding protein (333 aa).

A signal peptide spans 1-42; the sequence is MRLFREIAANDPGPTGRMKNMKTFTTALATGVLALCPLAALA. 5 residues coordinate trimethylamine N-oxide: tryptophan 55, tryptophan 102, glutamate 131, tryptophan 177, and tryptophan 222. The Ca(2+) site is built by proline 249, valine 251, asparagine 254, alanine 257, and aspartate 260.

As to quaternary structure, the complex is probably composed of two ATP-binding proteins (TmoW), two transmembrane proteins (TmoV) and a solute-binding protein (TmoX). Monomer in solution, but forms homodimers in crystals.

It is found in the periplasm. Binds a Ca(2+) ion, which has little effect on either the binding affinity or the secondary structure, but plays an important role in maintaining the stability of TmoX. It may modulate the protein stability in response to biological needs and environmental changes. Thermostability is dramatically decreased when Ca(2+) is removed by EDTA. Functionally, part of the ABC transporter complex TmoXWV involved in trimethylamine N-oxide (TMAO) import. Is specific for TMAO and essential for TMAO metabolism. Binds TMAO with high affinity. In vitro, also presents a high binding affinity for choline, however this transporter seems specific for TMAO and the choline-binding affinity presented by recombinant TmoX may not make physiological sense. In Ruegeria pomeroyi (strain ATCC 700808 / DSM 15171 / DSS-3) (Silicibacter pomeroyi), this protein is Trimethylamine N-oxide-binding protein.